Here is a 359-residue protein sequence, read N- to C-terminus: uncharacterized protein (359 aa).

An ATP-binding site is contributed by 46-53 (GPKSSGKS).

It belongs to the archaeal ATPase family.

This is an uncharacterized protein from Methanocaldococcus jannaschii (strain ATCC 43067 / DSM 2661 / JAL-1 / JCM 10045 / NBRC 100440) (Methanococcus jannaschii).